A 211-amino-acid polypeptide reads, in one-letter code: Large ribosomal subunit protein uL3 (211 aa).

At Q150 the chain carries N5-methylglutamine.

Belongs to the universal ribosomal protein uL3 family. In terms of assembly, part of the 50S ribosomal subunit. Forms a cluster with proteins L14 and L19. In terms of processing, methylated by PrmB.

Functionally, one of the primary rRNA binding proteins, it binds directly near the 3'-end of the 23S rRNA, where it nucleates assembly of the 50S subunit. The protein is Large ribosomal subunit protein uL3 of Pseudomonas fluorescens (strain ATCC BAA-477 / NRRL B-23932 / Pf-5).